Consider the following 412-residue polypeptide: Polyferredoxin protein MvhB (412 aa).

4Fe-4S ferredoxin-type domains are found at residues 2 to 29 (IIVN…VTPE), 30 to 57 (DVIY…LEDL), 67 to 96 (GRIV…LDEG), 97 to 127 (KVKK…VEGI), 138 to 166 (EGPI…LDKV), 168 to 197 (GVIE…ISGR), 207 to 236 (KKFE…PRTS), 238 to 266 (LTVE…LEVE), 276 to 305 (EGLV…VVTK), 314 to 345 (EKVD…LVDM), 357 to 386 (KRVQ…LTDE), and 385 to 412 (DEKV…LSLK). Positions 9, 12, 15, and 19 each coordinate [4Fe-4S] cluster. [4Fe-4S] cluster-binding residues include Cys76, Cys79, Cys82, Cys86, Cys107, Cys110, Cys113, Cys117, Cys146, Cys149, Cys152, Cys156, Cys177, Cys180, Cys183, Cys187, Cys216, Cys219, Cys222, Cys226, Cys246, Cys249, Cys252, and Cys256. Positions 325, 328, 331, 335, 366, 369, 372, 376, 394, 397, 400, and 404 each coordinate [4Fe-4S] cluster.

Requires [4Fe-4S] cluster as cofactor.

The sequence is that of Polyferredoxin protein MvhB (mvhB) from Methanothermobacter thermautotrophicus (strain ATCC 29096 / DSM 1053 / JCM 10044 / NBRC 100330 / Delta H) (Methanobacterium thermoautotrophicum).